Consider the following 82-residue polypeptide: Large ribosomal subunit protein uL29 (82 aa).

This sequence belongs to the universal ribosomal protein uL29 family.

In Trichodesmium erythraeum (strain IMS101), this protein is Large ribosomal subunit protein uL29.